The following is a 594-amino-acid chain: Adenine deaminase 1 (594 aa).

It belongs to the metallo-dependent hydrolases superfamily. Adenine deaminase family. Mn(2+) serves as cofactor.

It carries out the reaction adenine + H2O + H(+) = hypoxanthine + NH4(+). The chain is Adenine deaminase 1 from Desulfotalea psychrophila (strain LSv54 / DSM 12343).